Reading from the N-terminus, the 455-residue chain is GTPase Der (455 aa).

2 consecutive EngA-type G domains span residues 4 to 169 (PVVA…PPKD) and 178 to 353 (IQMS…EQHR). GTP contacts are provided by residues 10–17 (GRPNVGKS), 57–61 (DTGGL), 120–123 (NKCE), 184–191 (GRPNVGKS), 231–235 (DTAGI), and 296–299 (NKWD). The KH-like domain occupies 354 to 439 (RRVTTSVVNE…PLKLFWRGKQ (86 aa)).

The protein belongs to the TRAFAC class TrmE-Era-EngA-EngB-Septin-like GTPase superfamily. EngA (Der) GTPase family. In terms of assembly, associates with the 50S ribosomal subunit.

Functionally, GTPase that plays an essential role in the late steps of ribosome biogenesis. This is GTPase Der from Synechococcus sp. (strain CC9902).